Reading from the N-terminus, the 498-residue chain is Pyridine nucleotide-disulfide oxidoreductase domain-containing protein 1 (498 aa).

Residue methionine 1 is modified to N-acetylmethionine.

It belongs to the class-I pyridine nucleotide-disulfide oxidoreductase family. PYROXD1 subfamily. FAD is required as a cofactor.

It is found in the nucleus. The protein localises to the cytoplasm. Its subcellular location is the myofibril. It localises to the sarcomere. Its function is as follows. Probable FAD-dependent oxidoreductase; involved in the cellular oxidative stress response. Required for normal sarcomere structure and muscle fiber integrity. In Rattus norvegicus (Rat), this protein is Pyridine nucleotide-disulfide oxidoreductase domain-containing protein 1 (Pyroxd1).